The following is a 619-amino-acid chain: Pentatricopeptide repeat-containing protein At1g68980, mitochondrial (619 aa).

The N-terminal 100 residues, 1–100, are a transit peptide targeting the mitochondrion; the sequence is MLRKTLTLIS…RAFVSTTYVI (100 aa). PPR repeat units follow at residues 186 to 221, 222 to 256, 257 to 292, 295 to 329, 366 to 400, 401 to 435, 436 to 466, 472 to 506, 507 to 541, and 542 to 576; these read DLVA…GVKP, DELS…GFAS, RRIL…GEAS, SEET…ESMS, GIGV…GLQL, DVET…RVAD, LKRC…VMED, KSHD…QYEP, NNQT…KAKL, and EHAL…KIFV.

It belongs to the PPR family. P subfamily.

It is found in the mitochondrion. This chain is Pentatricopeptide repeat-containing protein At1g68980, mitochondrial, found in Arabidopsis thaliana (Mouse-ear cress).